Consider the following 69-residue polypeptide: Disintegrin EC6 subunit beta (69 aa).

Residues 1–65 form the Disintegrin domain; sequence NSVHPCCDPV…DCPPNPWNGK (65 aa). Intrachain disulfides connect Cys-6–Cys-29, Cys-20–Cys-26, Cys-25–Cys-50, and Cys-38–Cys-57. Residues 42–44 carry the Cell attachment site motif; that stretch reads RGD.

The protein belongs to the venom metalloproteinase (M12B) family. P-II subfamily. P-IIe sub-subfamily. In terms of assembly, heterodimer with subunit alpha; disulfide-linked. As to expression, expressed by the venom gland.

It is found in the secreted. In terms of biological role, potently inhibits adhesion of alpha-4/beta-1 (ITGA4/ITGB1) and alpha-9/beta-1 (ITGA9/ITGB1) integrins to VCAM1, and adhesion of alpha-5/beta-1 (ITGA5/ITGB1) integrin to fibronectin. Has a much less effect on alpha-IIb/beta-3 (ITGA2B/ITGB3) integrin. Also potently inhibits neutrophil migration across TNF-alpha-activated human umbilical endothelial cells. This is Disintegrin EC6 subunit beta from Echis carinatus sochureki (Saw-scaled viper).